The following is a 217-amino-acid chain: CLA biosynthesis enone reductase (217 aa).

FMN is bound by residues R20, S22, and R24. C51 is a binding site for 10-oxooctadecanoate. The FMN site is built by N78 and Q81. R118 provides a ligand contact to 10-oxooctadecanoate. FMN is bound by residues N165, S168, G169, and R206.

Belongs to the nitroreductase family. Homodimer. FMN is required as a cofactor.

It catalyses the reaction 10-oxo-(11E)-octadecenoate + NADH + H(+) = 10-oxooctadecanoate + NAD(+). It participates in lipid metabolism; fatty acid metabolism. In terms of biological role, is involved in a saturation metabolic pathway of polyunsaturated fatty acids, that detoxifies unsaturated fatty acids and generates hydroxy fatty acids, oxo fatty acids, conjugated fatty acids such as conjugated linoleic acids (CLAs), and partially saturated trans-fatty acids as intermediates. CLA-ER catalyzes the saturation of the carbon-carbon double bond in 10-oxo-(11E)-octadecenoate to produce 10-oxooctadecanoate, during linoleate metabolism. As part of the gut microbiome, this enzyme modifies host fatty acid composition and is expected to improve human health by altering lipid metabolism related to the onset of metabolic syndrome. The protein is CLA biosynthesis enone reductase of Lactiplantibacillus plantarum (Lactobacillus plantarum).